We begin with the raw amino-acid sequence, 513 residues long: Protein CYCLOPS (513 aa).

Disordered stretches follow at residues 329 to 380 and 395 to 435; these read QGRT…STQN and DDRK…AEAK. The span at 333–347 shows a compositional bias: low complexity; that stretch reads ASGEPSQSESSAAAP. Polar residues predominate over residues 359 to 380; it reads PSNSNQTLGDSSWKQVGESTQN. Short sequence motifs (nuclear localization signal) lie at residues 397 to 400 and 421 to 424; these read RKRK and KKRR. Residues 447 to 513 are a coiled coil; it reads MQAILKRCEN…ERILSETGKI (67 aa).

This sequence belongs to the CYCLOPS family. In terms of assembly, forms homodimers. Interacts with CCAMK. In terms of tissue distribution, highly expressed in roots. Expressed in root hairs and nodules. Not detected in leaves or flowers.

The protein localises to the nucleus. In terms of biological role, involved symbiotic signaling. Required for root infection by symbiotic rhizobia, infection thread (IT) formation, and nodule development. Required for proper induction of early nodulin gene expression. Probably not involved in nodule organogenesis. Involved in arbuscular mycorrhizal (AM) symbiosis. Required for fungal infection of the outer cortical cell layers, and for arbuscule development during the AM symbiosis. Acts downstream of CCAMK. Required for symbiosome formation (i.e. the release of the bacteria from the ITs) and subsequent symbiosome development. Required for the expression of the nodule-specific RPG gene, which controls proper IT growth and is essential for symbiosome formation. Acts upstream of ERN1, a transcriptional regulator required for nodulation. The sequence is that of Protein CYCLOPS from Medicago truncatula (Barrel medic).